The chain runs to 448 residues: T-box transcription factor TBX19 (448 aa).

A DNA-binding region (T-box) is located at residues 45 to 218 (LEDAPLWQRF…YNPFAKAFLD (174 aa)).

It is found in the nucleus. Transcriptional regulator involved in developmental processes. Can activate POMC gene expression and repress the alpha glycoprotein subunit and thyroid-stimulating hormone beta promoters. This is T-box transcription factor TBX19 from Homo sapiens (Human).